The primary structure comprises 469 residues: 3-isopropylmalate dehydratase large subunit (469 aa).

[4Fe-4S] cluster-binding residues include Cys347, Cys407, and Cys410. A compositionally biased stretch (polar residues) spans 424 to 441 (SASSSNRNFKGRQGSPSG). A disordered region spans residues 424 to 443 (SASSSNRNFKGRQGSPSGRT).

The protein belongs to the aconitase/IPM isomerase family. LeuC type 1 subfamily. In terms of assembly, heterodimer of LeuC and LeuD. [4Fe-4S] cluster is required as a cofactor.

The catalysed reaction is (2R,3S)-3-isopropylmalate = (2S)-2-isopropylmalate. The protein operates within amino-acid biosynthesis; L-leucine biosynthesis; L-leucine from 3-methyl-2-oxobutanoate: step 2/4. Catalyzes the isomerization between 2-isopropylmalate and 3-isopropylmalate, via the formation of 2-isopropylmaleate. The sequence is that of 3-isopropylmalate dehydratase large subunit from Prochlorococcus marinus (strain MIT 9312).